We begin with the raw amino-acid sequence, 215 residues long: Ribonuclease (215 aa).

A signal peptide spans 1-22; that stretch reads MKKIVVLLGMLLAPWFSSAVQA. Residues histidine 62, glutamate 102, and histidine 106 contribute to the active site. Positions 144-166 are disordered; that stretch reads KPLPAQGGSGQCQRLAGPGQHHG.

This sequence belongs to the RNase T2 family.

It is found in the periplasm. It localises to the cytoplasm. One of the few RNases that cleave the phosphodiester bond between any two nucleotide. Shows a preference for adenylic acid. This Aeromonas hydrophila protein is Ribonuclease.